Consider the following 413-residue polypeptide: Serine hydroxymethyltransferase (413 aa).

(6S)-5,6,7,8-tetrahydrofolate contacts are provided by residues leucine 117 and 121–123 (GHL). At lysine 226 the chain carries N6-(pyridoxal phosphate)lysine. (6S)-5,6,7,8-tetrahydrofolate-binding positions include glutamate 239 and 349 to 351 (SPF).

Belongs to the SHMT family. Homodimer. It depends on pyridoxal 5'-phosphate as a cofactor.

It localises to the cytoplasm. It carries out the reaction (6R)-5,10-methylene-5,6,7,8-tetrahydrofolate + glycine + H2O = (6S)-5,6,7,8-tetrahydrofolate + L-serine. It participates in one-carbon metabolism; tetrahydrofolate interconversion. The protein operates within amino-acid biosynthesis; glycine biosynthesis; glycine from L-serine: step 1/1. Catalyzes the reversible interconversion of serine and glycine with tetrahydrofolate (THF) serving as the one-carbon carrier. This reaction serves as the major source of one-carbon groups required for the biosynthesis of purines, thymidylate, methionine, and other important biomolecules. Also exhibits THF-independent aldolase activity toward beta-hydroxyamino acids, producing glycine and aldehydes, via a retro-aldol mechanism. This Bacillus cytotoxicus (strain DSM 22905 / CIP 110041 / 391-98 / NVH 391-98) protein is Serine hydroxymethyltransferase.